Consider the following 156-residue polypeptide: Small ribosomal subunit protein uS7 (156 aa).

Belongs to the universal ribosomal protein uS7 family. In terms of assembly, part of the 30S ribosomal subunit. Contacts proteins S9 and S11.

Its function is as follows. One of the primary rRNA binding proteins, it binds directly to 16S rRNA where it nucleates assembly of the head domain of the 30S subunit. Is located at the subunit interface close to the decoding center, probably blocks exit of the E-site tRNA. In Shewanella sediminis (strain HAW-EB3), this protein is Small ribosomal subunit protein uS7.